A 303-amino-acid chain; its full sequence is Ribosomal RNA small subunit methyltransferase H (303 aa).

S-adenosyl-L-methionine-binding positions include 33–35 (GGH), Asp-52, Phe-79, Asp-97, and Gln-104.

It belongs to the methyltransferase superfamily. RsmH family.

It is found in the cytoplasm. It catalyses the reaction cytidine(1402) in 16S rRNA + S-adenosyl-L-methionine = N(4)-methylcytidine(1402) in 16S rRNA + S-adenosyl-L-homocysteine + H(+). Functionally, specifically methylates the N4 position of cytidine in position 1402 (C1402) of 16S rRNA. In Wolinella succinogenes (strain ATCC 29543 / DSM 1740 / CCUG 13145 / JCM 31913 / LMG 7466 / NCTC 11488 / FDC 602W) (Vibrio succinogenes), this protein is Ribosomal RNA small subunit methyltransferase H.